The primary structure comprises 129 residues: MSNIPSELKYASSHEWVRNEGDGTFTVGITEHAQELLGDMVFVELPEVGDEVDAGEECAVAESVKAASDIYAPIGGEIVAINEELEDAPETVNTDAFGDGWLFRIKASDESELENLLNAEDYANTIDED.

Positions 24–106 (TFTVGITEHA…FGDGWLFRIK (83 aa)) constitute a Lipoyl-binding domain. Lysine 65 carries the N6-lipoyllysine modification.

The protein belongs to the GcvH family. The glycine cleavage system is composed of four proteins: P, T, L and H. (R)-lipoate serves as cofactor.

In terms of biological role, the glycine cleavage system catalyzes the degradation of glycine. The H protein shuttles the methylamine group of glycine from the P protein to the T protein. The polypeptide is Glycine cleavage system H protein (Pseudoalteromonas translucida (strain TAC 125)).